Here is a 335-residue protein sequence, read N- to C-terminus: Ethanol acetyltransferase 1 (335 aa).

The AB hydrolase-1 domain occupies 48–300 (PIVFVHGIFG…NSAHDILDQR (253 aa)). Active-site charge relay system residues include Ser-121, Asp-145, and His-294.

This sequence belongs to the AB hydrolase superfamily.

It localises to the mitochondrion. The enzyme catalyses ethanol + acetyl-CoA = ethyl acetate + CoA. It catalyses the reaction acetyl-CoA + H2O = acetate + CoA + H(+). The catalysed reaction is ethyl acetate + H2O = ethanol + acetate + H(+). Alcohol acetyltransferase that catalyzes the synthesis of ethyl acetate from ethanol and acetyl-CoA. Can also function as a thioesterase by hydrolyzing acetyl-CoA in the absence of ethanol, as well as esterase hydrolyzing ethyl acetate. This chain is Ethanol acetyltransferase 1 (EAT1), found in Cyberlindnera fabianii (Yeast).